The primary structure comprises 404 residues: Pyrophosphate--fructose 6-phosphate 1-phosphotransferase (404 aa).

Glycine 13 contacts diphosphate. Mg(2+) is bound at residue asparagine 108. Residues 136 to 138, 180 to 182, glutamate 237, and 295 to 298 contribute to the substrate site; these read TID, MGR, and YLQR. Residue aspartate 138 is the Proton acceptor of the active site.

It belongs to the phosphofructokinase type A (PFKA) family. PPi-dependent PFK group II subfamily. Clade 'B2' sub-subfamily. Homodimer. Requires Mg(2+) as cofactor.

It is found in the cytoplasm. The enzyme catalyses beta-D-fructose 6-phosphate + diphosphate = beta-D-fructose 1,6-bisphosphate + phosphate + H(+). The protein operates within carbohydrate degradation; glycolysis; D-glyceraldehyde 3-phosphate and glycerone phosphate from D-glucose: step 3/4. Non-allosteric. Functionally, catalyzes the phosphorylation of D-fructose 6-phosphate, the first committing step of glycolysis. Uses inorganic phosphate (PPi) as phosphoryl donor instead of ATP like common ATP-dependent phosphofructokinases (ATP-PFKs), which renders the reaction reversible, and can thus function both in glycolysis and gluconeogenesis. Consistently, PPi-PFK can replace the enzymes of both the forward (ATP-PFK) and reverse (fructose-bisphosphatase (FBPase)) reactions. In Rhodospirillum rubrum (strain ATCC 11170 / ATH 1.1.1 / DSM 467 / LMG 4362 / NCIMB 8255 / S1), this protein is Pyrophosphate--fructose 6-phosphate 1-phosphotransferase.